Here is a 315-residue protein sequence, read N- to C-terminus: HPr kinase/phosphorylase (315 aa).

Active-site residues include His140 and Lys161. Residue 155 to 162 (GDSGVGKS) coordinates ATP. Residue Ser162 participates in Mg(2+) binding. Asp179 acts as the Proton acceptor; for phosphorylation activity. Proton donor; for dephosphorylation activity in catalysis. An important for the catalytic mechanism of both phosphorylation and dephosphorylation region spans residues 203 to 212 (LEIRGIGIID). Residue Glu204 coordinates Mg(2+). Arg245 is a catalytic residue. An important for the catalytic mechanism of dephosphorylation region spans residues 266–271 (PVKTGR).

Belongs to the HPrK/P family. Homohexamer. Mg(2+) is required as a cofactor.

It catalyses the reaction [HPr protein]-L-serine + ATP = [HPr protein]-O-phospho-L-serine + ADP + H(+). The catalysed reaction is [HPr protein]-O-phospho-L-serine + phosphate + H(+) = [HPr protein]-L-serine + diphosphate. Functionally, catalyzes the ATP- as well as the pyrophosphate-dependent phosphorylation of a specific serine residue in HPr, a phosphocarrier protein of the phosphoenolpyruvate-dependent sugar phosphotransferase system (PTS). HprK/P also catalyzes the pyrophosphate-producing, inorganic phosphate-dependent dephosphorylation (phosphorolysis) of seryl-phosphorylated HPr (P-Ser-HPr). The two antagonistic activities of HprK/P are regulated by several intracellular metabolites, which change their concentration in response to the absence or presence of rapidly metabolisable carbon sources (glucose, fructose, etc.) in the growth medium. Therefore, by controlling the phosphorylation state of HPr, HPrK/P is a sensor enzyme that plays a major role in the regulation of carbon metabolism and sugar transport: it mediates carbon catabolite repression (CCR), and regulates PTS-catalyzed carbohydrate uptake and inducer exclusion. The polypeptide is HPr kinase/phosphorylase (Lactiplantibacillus plantarum (strain ATCC BAA-793 / NCIMB 8826 / WCFS1) (Lactobacillus plantarum)).